Consider the following 180-residue polypeptide: Outer membrane protein YfaZ (180 aa).

Positions 1–21 are cleaved as a signal peptide; that stretch reads MKKIALAGLAGMLLVSASVNA.

The protein resides in the cell outer membrane. This chain is Outer membrane protein YfaZ (yfaZ), found in Escherichia coli (strain K12).